Here is a 525-residue protein sequence, read N- to C-terminus: Glutamyl-tRNA(Gln) amidotransferase subunit A, mitochondrial (525 aa).

Residues K76 and S168 each act as charge relay system in the active site. The active-site Acyl-ester intermediate is the S192.

The protein belongs to the amidase family. GatA subfamily. In terms of assembly, subunit of the heterotrimeric GatCAB amidotransferase (AdT) complex, composed of A (QRSL1), B (GATB) and C (GATC) subunits.

It is found in the mitochondrion. It carries out the reaction L-glutamyl-tRNA(Gln) + L-glutamine + ATP + H2O = L-glutaminyl-tRNA(Gln) + L-glutamate + ADP + phosphate + H(+). Its function is as follows. Allows the formation of correctly charged Gln-tRNA(Gln) through the transamidation of misacylated Glu-tRNA(Gln) in the mitochondria. The reaction takes place in the presence of glutamine and ATP through an activated gamma-phospho-Glu-tRNA(Gln). This chain is Glutamyl-tRNA(Gln) amidotransferase subunit A, mitochondrial (Qrsl1), found in Rattus norvegicus (Rat).